Consider the following 198-residue polypeptide: Glutamyl-tRNA(Gln) amidotransferase subunit C, mitochondrial (198 aa).

The protein belongs to the GatC family. In terms of assembly, subunit of the heterotrimeric GatCAB amidotransferase (AdT) complex, composed of A, B and C subunits.

Its subcellular location is the mitochondrion. The enzyme catalyses L-glutamyl-tRNA(Gln) + L-glutamine + ATP + H2O = L-glutaminyl-tRNA(Gln) + L-glutamate + ADP + phosphate + H(+). Functionally, allows the formation of correctly charged Gln-tRNA(Gln) through the transamidation of misacylated Glu-tRNA(Gln) in the mitochondria. The reaction takes place in the presence of glutamine and ATP through an activated gamma-phospho-Glu-tRNA(Gln). The protein is Glutamyl-tRNA(Gln) amidotransferase subunit C, mitochondrial of Caenorhabditis remanei (Caenorhabditis vulgaris).